The following is a 206-amino-acid chain: Nucleoside triphosphate pyrophosphatase (206 aa).

Catalysis depends on D76, which acts as the Proton acceptor.

It belongs to the Maf family. The cofactor is a divalent metal cation.

Its subcellular location is the cytoplasm. It catalyses the reaction a ribonucleoside 5'-triphosphate + H2O = a ribonucleoside 5'-phosphate + diphosphate + H(+). The enzyme catalyses a 2'-deoxyribonucleoside 5'-triphosphate + H2O = a 2'-deoxyribonucleoside 5'-phosphate + diphosphate + H(+). In terms of biological role, nucleoside triphosphate pyrophosphatase. May have a dual role in cell division arrest and in preventing the incorporation of modified nucleotides into cellular nucleic acids. This Streptomyces coelicolor (strain ATCC BAA-471 / A3(2) / M145) protein is Nucleoside triphosphate pyrophosphatase.